The chain runs to 556 residues: Formate--tetrahydrofolate ligase (556 aa).

65-72 (TPAGEGKT) is an ATP binding site.

Belongs to the formate--tetrahydrofolate ligase family.

The catalysed reaction is (6S)-5,6,7,8-tetrahydrofolate + formate + ATP = (6R)-10-formyltetrahydrofolate + ADP + phosphate. It functions in the pathway one-carbon metabolism; tetrahydrofolate interconversion. This Symbiobacterium thermophilum (strain DSM 24528 / JCM 14929 / IAM 14863 / T) protein is Formate--tetrahydrofolate ligase.